Here is a 156-residue protein sequence, read N- to C-terminus: Arginine repressor (156 aa).

It belongs to the ArgR family.

The protein localises to the cytoplasm. The protein operates within amino-acid biosynthesis; L-arginine biosynthesis [regulation]. In terms of biological role, regulates arginine biosynthesis genes. This chain is Arginine repressor, found in Sodalis glossinidius (strain morsitans).